Reading from the N-terminus, the 288-residue chain is Diaminopimelate epimerase (288 aa).

Substrate-binding residues include Asn13, Gln46, and Asn66. Cys75 acts as the Proton donor in catalysis. Substrate is bound by residues 76–77 (GN), Asn166, Asn199, and 217–218 (ER). The Proton acceptor role is filled by Cys226. A substrate-binding site is contributed by 227 to 228 (GT).

It belongs to the diaminopimelate epimerase family. As to quaternary structure, homodimer.

The protein localises to the cytoplasm. It carries out the reaction (2S,6S)-2,6-diaminopimelate = meso-2,6-diaminopimelate. Its pathway is amino-acid biosynthesis; L-lysine biosynthesis via DAP pathway; DL-2,6-diaminopimelate from LL-2,6-diaminopimelate: step 1/1. Functionally, catalyzes the stereoinversion of LL-2,6-diaminopimelate (L,L-DAP) to meso-diaminopimelate (meso-DAP), a precursor of L-lysine and an essential component of the bacterial peptidoglycan. The sequence is that of Diaminopimelate epimerase from Cupriavidus pinatubonensis (strain JMP 134 / LMG 1197) (Cupriavidus necator (strain JMP 134)).